The following is a 730-amino-acid chain: Exostosin-1a (730 aa).

Residues 1-6 (MQAKKR) lie on the Cytoplasmic side of the membrane. The helical; Signal-anchor for type II membrane protein transmembrane segment at 7–27 (YLILFSAGVCLILLFYLQGPA) threads the bilayer. The Lumenal segment spans residues 28–730 (SRRTPKRGDD…RKKYRDIERL (703 aa)). N-linked (GlcNAc...) asparagine glycosylation occurs at asparagine 314. Residues arginine 533, aspartate 549, glutamate 550, aspartate 551, glutamate 637, aspartate 638, and arginine 685 each contribute to the UDP-N-acetyl-alpha-D-glucosamine site. Residue aspartate 551 coordinates Mn(2+). Cysteine 636 and cysteine 688 are joined by a disulfide. Aspartate 638 is an active-site residue.

This sequence belongs to the glycosyltransferase 47 family. The cofactor is Mn(2+).

The protein resides in the endoplasmic reticulum membrane. It carries out the reaction 3-O-{[(1-&gt;4)-beta-D-GlcA-(1-&gt;4)-alpha-D-GlcNAc](n)-(1-&gt;4)-beta-D-GlcA-(1-&gt;3)-beta-D-Gal-(1-&gt;3)-beta-D-Gal-(1-&gt;4)-beta-D-Xyl}-L-seryl-[protein] + UDP-N-acetyl-alpha-D-glucosamine = 3-O-{alpha-D-GlcNAc-[(1-&gt;4)-beta-D-GlcA-(1-&gt;4)-alpha-D-GlcNAc](n)-(1-&gt;4)-beta-D-GlcA-(1-&gt;3)-beta-D-Gal-(1-&gt;3)-beta-D-Gal-(1-&gt;4)-beta-D-Xyl}-L-seryl-[protein] + UDP + H(+). It catalyses the reaction 3-O-{alpha-D-GlcNAc-[(1-&gt;4)-beta-D-GlcA-(1-&gt;4)-alpha-D-GlcNAc](n)-(1-&gt;4)-beta-D-GlcA-(1-&gt;3)-beta-D-Gal-(1-&gt;3)-beta-D-Gal-(1-&gt;4)-beta-D-Xyl}-L-seryl-[protein] + UDP-alpha-D-glucuronate = 3-O-{[(1-&gt;4)-beta-D-GlcA-(1-&gt;4)-alpha-D-GlcNAc](n+1)-(1-&gt;4)-beta-D-GlcA-(1-&gt;3)-beta-D-Gal-(1-&gt;3)-beta-D-Gal-(1-&gt;4)-beta-D-Xyl}-L-seryl-[protein] + UDP + H(+). Its pathway is protein modification; protein glycosylation. Its function is as follows. Glycosyltransferase required for the biosynthesis of heparan-sulfate. This is Exostosin-1a (ext1a) from Danio rerio (Zebrafish).